The sequence spans 189 residues: Putative manganese efflux pump MntP (189 aa).

6 helical membrane-spanning segments follow: residues 3–23 (LSAT…ASIG), 41–61 (LIFG…GLFA), 65–85 (IMEW…CRMI), 104–124 (FWVL…IGVG), 132–152 (IVHT…LGML), and 167–187 (IIGG…HMHL).

Belongs to the MntP (TC 9.B.29) family.

It is found in the cell inner membrane. In terms of biological role, probably functions as a manganese efflux pump. The protein is Putative manganese efflux pump MntP of Yersinia pseudotuberculosis serotype O:1b (strain IP 31758).